We begin with the raw amino-acid sequence, 424 residues long: Adenylosuccinate synthetase (424 aa).

GTP-binding positions include 12 to 18 (GDEGKGK) and 40 to 42 (GHT). Asp13 (proton acceptor) is an active-site residue. The Mg(2+) site is built by Asp13 and Gly40. IMP-binding positions include 13 to 16 (DEGK), 38 to 41 (NAGH), Thr130, Arg144, Asn220, Thr235, and Arg299. The active-site Proton donor is His41. 295–301 (VTTGRKR) contributes to the substrate binding site. GTP contacts are provided by residues Arg301, 327–329 (KLD), and 412–414 (GTG).

Belongs to the adenylosuccinate synthetase family. In terms of assembly, homodimer. Requires Mg(2+) as cofactor.

It localises to the cytoplasm. It catalyses the reaction IMP + L-aspartate + GTP = N(6)-(1,2-dicarboxyethyl)-AMP + GDP + phosphate + 2 H(+). It functions in the pathway purine metabolism; AMP biosynthesis via de novo pathway; AMP from IMP: step 1/2. In terms of biological role, plays an important role in the de novo pathway and in the salvage pathway of purine nucleotide biosynthesis. Catalyzes the first committed step in the biosynthesis of AMP from IMP. This is Adenylosuccinate synthetase (adB) from Emericella nidulans (strain FGSC A4 / ATCC 38163 / CBS 112.46 / NRRL 194 / M139) (Aspergillus nidulans).